A 154-amino-acid chain; its full sequence is Putative pre-16S rRNA nuclease (154 aa).

It belongs to the YqgF nuclease family.

Its subcellular location is the cytoplasm. In terms of biological role, could be a nuclease involved in processing of the 5'-end of pre-16S rRNA. This Rickettsia canadensis (strain McKiel) protein is Putative pre-16S rRNA nuclease.